The chain runs to 63 residues: Cytochrome c oxidase subunit 7C, mitochondrial (63 aa).

A mitochondrion-targeting transit peptide spans 1–16 (MLGQSIRRFTTSVVRR). Topologically, residues 17–33 (SHYEEGPGKNIPFSVEN) are mitochondrial matrix. Residue lysine 25 is modified to N6-acetyllysine; alternate. Lysine 25 carries the N6-succinyllysine; alternate modification. A helical transmembrane segment spans residues 34–60 (KWRLLAMMTLFFGSGFAAPFFIVRHQL). The Mitochondrial intermembrane segment spans residues 61-63 (LKK).

The protein belongs to the cytochrome c oxidase VIIc family. As to quaternary structure, component of the cytochrome c oxidase (complex IV, CIV), a multisubunit enzyme composed of 14 subunits. The complex is composed of a catalytic core of 3 subunits MT-CO1, MT-CO2 and MT-CO3, encoded in the mitochondrial DNA, and 11 supernumerary subunits COX4I1 (or COX4I2), COX5A, COX5B, COX6A2 (or COX6A1), COX6B1 (or COX6B2), COX6C, COX7A1 (or COX7A2), COX7B, COX7C, COX8B and NDUFA4, which are encoded in the nuclear genome. The complex exists as a monomer or a dimer and forms supercomplexes (SCs) in the inner mitochondrial membrane with NADH-ubiquinone oxidoreductase (complex I, CI) and ubiquinol-cytochrome c oxidoreductase (cytochrome b-c1 complex, complex III, CIII), resulting in different assemblies (supercomplex SCI(1)III(2)IV(1) and megacomplex MCI(2)III(2)IV(2)). Interacts with RAB5IF. In terms of tissue distribution, liver, heart, muscle and brain, contain the same isoform of COX VIIc, but at different concentrations.

It is found in the mitochondrion inner membrane. It participates in energy metabolism; oxidative phosphorylation. Component of the cytochrome c oxidase, the last enzyme in the mitochondrial electron transport chain which drives oxidative phosphorylation. The respiratory chain contains 3 multisubunit complexes succinate dehydrogenase (complex II, CII), ubiquinol-cytochrome c oxidoreductase (cytochrome b-c1 complex, complex III, CIII) and cytochrome c oxidase (complex IV, CIV), that cooperate to transfer electrons derived from NADH and succinate to molecular oxygen, creating an electrochemical gradient over the inner membrane that drives transmembrane transport and the ATP synthase. Cytochrome c oxidase is the component of the respiratory chain that catalyzes the reduction of oxygen to water. Electrons originating from reduced cytochrome c in the intermembrane space (IMS) are transferred via the dinuclear copper A center (CU(A)) of subunit 2 and heme A of subunit 1 to the active site in subunit 1, a binuclear center (BNC) formed by heme A3 and copper B (CU(B)). The BNC reduces molecular oxygen to 2 water molecules using 4 electrons from cytochrome c in the IMS and 4 protons from the mitochondrial matrix. This Bos taurus (Bovine) protein is Cytochrome c oxidase subunit 7C, mitochondrial (COX7C).